A 198-amino-acid chain; its full sequence is Putative pseudouridine methyltransferase (198 aa).

Residues M132 and C186 each contribute to the S-adenosyl-L-methionine site.

It belongs to the methyltransferase superfamily. TrmY family.

Its subcellular location is the cytoplasm. The polypeptide is Putative pseudouridine methyltransferase (Photobacterium profundum (strain SS9)).